We begin with the raw amino-acid sequence, 326 residues long: tRNA-modifying protein YgfZ (326 aa).

The folate site is built by Trp27 and Trp189.

The protein belongs to the tRNA-modifying YgfZ family.

It localises to the cytoplasm. In terms of biological role, folate-binding protein involved in regulating the level of ATP-DnaA and in the modification of some tRNAs. It is probably a key factor in regulatory networks that act via tRNA modification, such as initiation of chromosomal replication. The sequence is that of tRNA-modifying protein YgfZ from Shigella dysenteriae serotype 1 (strain Sd197).